The primary structure comprises 192 residues: Large ribosomal subunit protein bL9 (192 aa).

A disordered region spans residues 172–192 (DALRPEDFFDPEADGIDEDEA). Residues 179–192 (FFDPEADGIDEDEA) are compositionally biased toward acidic residues.

Belongs to the bacterial ribosomal protein bL9 family.

In terms of biological role, binds to the 23S rRNA. This is Large ribosomal subunit protein bL9 from Rhizobium etli (strain CIAT 652).